The chain runs to 211 residues: Large ribosomal subunit protein uL3 (211 aa).

Position 150 is an N5-methylglutamine (Q150).

This sequence belongs to the universal ribosomal protein uL3 family. Part of the 50S ribosomal subunit. Forms a cluster with proteins L14 and L19. In terms of processing, methylated by PrmB.

One of the primary rRNA binding proteins, it binds directly near the 3'-end of the 23S rRNA, where it nucleates assembly of the 50S subunit. The chain is Large ribosomal subunit protein uL3 from Pseudomonas savastanoi pv. phaseolicola (strain 1448A / Race 6) (Pseudomonas syringae pv. phaseolicola (strain 1448A / Race 6)).